The sequence spans 804 residues: MRGTSIREGAPKTLLARALYDNHADCSDELAFSRGDILTIVEQNVPESEGWWRCLLHGRQGLAPANRLQVLRETPADRPCPLLPRGPDTDLTSSGAPYQVQDLISPPPQGPVYEPMRSWVEGPSPATAQVYELPESPSSARIICEKTLSFPKQALSVLPRPTRASLPTLPSQVYDVPVQRQGFSTLERLEKQQFYDIPTSSQKALLHSSTSQGRDVTLAPTMAFRQGGGYNPLSSPQKSERIHDTPVLLEKADVRNVSMTSFTKDSGSRAIPGSSAVHTGAVALSPQLGNTVQRKNSLPEEPTYAFPTSRDPLPSDAGGSYKVPSRFLIPRVEQQNTMPNIYDTPKAMQGVSHNAPKAMQGVSLAGKELERGREAPENSPWISGQTSFLSPDSDRLSVASSDSRASVVSSCSSISMDSSSGSSSEDSVKELWMDVDFAKETAVSLQHKVASSAAGLLLFVSRTWRFKDSLETNIHRIRRAADHVEESVREFLDFAQGVGGTACNLTDSYLQARIRDQLQTISSSYQTLLDAKGSLDRCNWSLEVLVTDKVQNSLDDLERFVATARIVPEDVKRFTSIVIANGKLLFKQNCEKGEMDLKCERCIRPPQRETESYQESSPFDRQPTTEHSFELARKNRVNVCWQQSPNLQEKGKPTMEGKSNRNPDFHGMSPPPLTSPSPSGQNTERKIHLSKHSRLYFGALFKAISVFASSLSNGQPPEVFITQSKLVITVGQKLVDTLCSETQEKDERNEILCGSSHLCGLLKDLALATKSAVIQYPSPSALSLLQSEVERLEHHSRKFRDTLE.

One can recognise an SH3 domain in the interval 11–73 (PKTLLARALY…PANRLQVLRE (63 aa)). Ser-200 and Ser-297 each carry phosphoserine. 3 disordered regions span residues 369–395 (LERGREAPENSPWISGQTSFLSPDSDR), 607–628 (QRETESYQESSPFDRQPTTEHS), and 642–686 (QQSP…TERK). A compositionally biased stretch (polar residues) spans 380-390 (PWISGQTSFLS). A compositionally biased stretch (basic and acidic residues) spans 649–664 (EKGKPTMEGKSNRNPD).

The protein belongs to the CAS family. Interacts (via SH3 domain) with PTK2/FAK1 (via C-terminus). In terms of processing, phosphorylated on tyrosines by SRC.

The protein localises to the cytoplasm. It is found in the cytoskeleton. It localises to the cell junction. The protein resides in the focal adhesion. Docking protein that plays a role in tyrosine kinase-based signaling related to cell adhesion and cell spreading. Regulates PTK2/FAK1 activity, focal adhesion integrity, and cell spreading. This Mus musculus (Mouse) protein is Cas scaffolding protein family member 4.